A 394-amino-acid polypeptide reads, in one-letter code: S-adenosylmethionine synthase 2 (394 aa).

Mg(2+) is bound at residue glutamate 11. Residue histidine 17 participates in ATP binding. Glutamate 45 contacts K(+). The L-methionine site is built by glutamate 58 and glutamine 101. Residues 169–171 (DGK), 237–240 (SGRF), aspartate 248, 254–255 (RK), alanine 271, lysine 275, and lysine 279 each bind ATP. An L-methionine-binding site is contributed by aspartate 248. Lysine 279 is an L-methionine binding site.

This sequence belongs to the AdoMet synthase family. In terms of assembly, homotetramer. Mn(2+) is required as a cofactor. Mg(2+) serves as cofactor. It depends on Co(2+) as a cofactor. Requires K(+) as cofactor.

It localises to the cytoplasm. It catalyses the reaction L-methionine + ATP + H2O = S-adenosyl-L-methionine + phosphate + diphosphate. The protein operates within amino-acid biosynthesis; S-adenosyl-L-methionine biosynthesis; S-adenosyl-L-methionine from L-methionine: step 1/1. Catalyzes the formation of S-adenosylmethionine from methionine and ATP. The reaction comprises two steps that are both catalyzed by the same enzyme: formation of S-adenosylmethionine (AdoMet) and triphosphate, and subsequent hydrolysis of the triphosphate. The chain is S-adenosylmethionine synthase 2 (SAM2) from Oryza sativa subsp. japonica (Rice).